The following is a 218-amino-acid chain: Synaptonemal complex central element protein 2 (218 aa).

A compositionally biased stretch (basic and acidic residues) spans 1–32 (MERQGVDVPHVKCKDQEPQPLGESKEHPRWEE). The disordered stretch occupies residues 1 to 42 (MERQGVDVPHVKCKDQEPQPLGESKEHPRWEENCEEEAGGGP). The stretch at 61-87 (SSLDSSIDILQKRAQELIENINKSRQK) forms a coiled coil. The tract at residues 171–218 (RWGPDHSRGKSPPRPGNSQPPDVFVSSVAETTSQATASEVQTNRDGEC) is disordered. Positions 198 to 211 (VAETTSQATASEVQ) are enriched in polar residues.

The protein belongs to the SYCE family. In terms of assembly, homodimer. Found in a complex with SYCP1 and SYCE1. Interacts with SYCP1, SYCE1 and SYCE3. Interacts with TEX12.

Its subcellular location is the nucleus. The protein localises to the chromosome. In terms of biological role, major component of the transverse central element of synaptonemal complexes (SCS), formed between homologous chromosomes during meiotic prophase. Requires SYCP1 in order to be incorporated into the central element. May have a role in the synaptonemal complex assembly, stabilization and recombination. The polypeptide is Synaptonemal complex central element protein 2 (SYCE2) (Homo sapiens (Human)).